The following is a 454-amino-acid chain: Allantoinase (454 aa).

Zn(2+) is bound by residues histidine 59, histidine 61, lysine 150, histidine 190, histidine 246, and aspartate 319. At lysine 150 the chain carries N6-carboxylysine.

Belongs to the metallo-dependent hydrolases superfamily. Allantoinase family. Homotetramer. Requires Zn(2+) as cofactor. Carboxylation allows a single lysine to coordinate two zinc ions.

It catalyses the reaction (S)-allantoin + H2O = allantoate + H(+). It functions in the pathway nitrogen metabolism; (S)-allantoin degradation; allantoate from (S)-allantoin: step 1/1. Catalyzes the conversion of allantoin (5-ureidohydantoin) to allantoic acid by hydrolytic cleavage of the five-member hydantoin ring. The chain is Allantoinase from Bacillus licheniformis (strain ATCC 14580 / DSM 13 / JCM 2505 / CCUG 7422 / NBRC 12200 / NCIMB 9375 / NCTC 10341 / NRRL NRS-1264 / Gibson 46).